Consider the following 229-residue polypeptide: MNQWEELQESVGFDFKDVELLKQAFTHSSYVNEHRRENVKDNERLEFLGDAVLELTVSNYLFNKYPDMAEGHMTKMRAAIVCEPSLVEFAEAVHFSKYVRLGKGEEKAGGRTRPALLADVFESFIGALYLDNGIDKVVTFLERVIFPKIDAGAYLQTVDYKTQLQEIVQRDRDVLIEYDILGETGPAHNKAFDAQVIVNGQVLGKGSGRTKKQAEQSAAQFAINQLTHR.

In terms of domain architecture, RNase III spans 4–133 (WEELQESVGF…FIGALYLDNG (130 aa)). E46 is a binding site for Mg(2+). Residue D50 is part of the active site. Mg(2+) contacts are provided by D119 and E122. The active site involves E122. Residues 159–228 (DYKTQLQEIV…AQFAINQLTH (70 aa)) form the DRBM domain.

This sequence belongs to the ribonuclease III family. As to quaternary structure, homodimer. Mg(2+) is required as a cofactor.

The protein resides in the cytoplasm. The enzyme catalyses Endonucleolytic cleavage to 5'-phosphomonoester.. Its function is as follows. Digests double-stranded RNA. Involved in the processing of primary rRNA transcript to yield the immediate precursors to the large and small rRNAs (23S and 16S). Processes some mRNAs, and tRNAs when they are encoded in the rRNA operon. Processes pre-crRNA and tracrRNA of type II CRISPR loci if present in the organism. This Listeria monocytogenes serotype 4b (strain CLIP80459) protein is Ribonuclease 3.